The primary structure comprises 148 residues: Arginine repressor (148 aa).

This sequence belongs to the ArgR family.

It is found in the cytoplasm. The protein operates within amino-acid biosynthesis; L-arginine biosynthesis [regulation]. In terms of biological role, regulates arginine biosynthesis genes. This is Arginine repressor from Chlorobium phaeobacteroides (strain BS1).